A 140-amino-acid chain; its full sequence is Large-conductance mechanosensitive channel (140 aa).

Transmembrane regions (helical) follow at residues 16–36 (VVDL…VDSI) and 86–106 (GSFL…FLMV).

Belongs to the MscL family. Homopentamer.

The protein resides in the cell inner membrane. Channel that opens in response to stretch forces in the membrane lipid bilayer. May participate in the regulation of osmotic pressure changes within the cell. The chain is Large-conductance mechanosensitive channel from Anaeromyxobacter sp. (strain K).